A 382-amino-acid polypeptide reads, in one-letter code: UDP-N-acetylglucosamine--N-acetylmuramyl-(pentapeptide) pyrophosphoryl-undecaprenol N-acetylglucosamine transferase (382 aa).

Residues 22–24 (TGG), N134, R186, S212, 285–290 (ALTVAE), and Q311 contribute to the UDP-N-acetyl-alpha-D-glucosamine site.

Belongs to the glycosyltransferase 28 family. MurG subfamily.

It localises to the cell inner membrane. The enzyme catalyses di-trans,octa-cis-undecaprenyl diphospho-N-acetyl-alpha-D-muramoyl-L-alanyl-D-glutamyl-meso-2,6-diaminopimeloyl-D-alanyl-D-alanine + UDP-N-acetyl-alpha-D-glucosamine = di-trans,octa-cis-undecaprenyl diphospho-[N-acetyl-alpha-D-glucosaminyl-(1-&gt;4)]-N-acetyl-alpha-D-muramoyl-L-alanyl-D-glutamyl-meso-2,6-diaminopimeloyl-D-alanyl-D-alanine + UDP + H(+). The protein operates within cell wall biogenesis; peptidoglycan biosynthesis. Functionally, cell wall formation. Catalyzes the transfer of a GlcNAc subunit on undecaprenyl-pyrophosphoryl-MurNAc-pentapeptide (lipid intermediate I) to form undecaprenyl-pyrophosphoryl-MurNAc-(pentapeptide)GlcNAc (lipid intermediate II). The protein is UDP-N-acetylglucosamine--N-acetylmuramyl-(pentapeptide) pyrophosphoryl-undecaprenol N-acetylglucosamine transferase of Pseudoalteromonas atlantica (strain T6c / ATCC BAA-1087).